The sequence spans 513 residues: 2-isopropylmalate synthase (513 aa).

The Pyruvate carboxyltransferase domain occupies leucine 5–valine 268. Mn(2+) contacts are provided by aspartate 14, histidine 202, histidine 204, and asparagine 239. Residues arginine 394–isoleucine 513 form a regulatory domain region.

Belongs to the alpha-IPM synthase/homocitrate synthase family. LeuA type 1 subfamily. As to quaternary structure, homodimer. Mn(2+) serves as cofactor.

It localises to the cytoplasm. The catalysed reaction is 3-methyl-2-oxobutanoate + acetyl-CoA + H2O = (2S)-2-isopropylmalate + CoA + H(+). It functions in the pathway amino-acid biosynthesis; L-leucine biosynthesis; L-leucine from 3-methyl-2-oxobutanoate: step 1/4. Catalyzes the condensation of the acetyl group of acetyl-CoA with 3-methyl-2-oxobutanoate (2-ketoisovalerate) to form 3-carboxy-3-hydroxy-4-methylpentanoate (2-isopropylmalate). In Ralstonia nicotianae (strain ATCC BAA-1114 / GMI1000) (Ralstonia solanacearum), this protein is 2-isopropylmalate synthase.